The sequence spans 224 residues: MSLKLLPEESRPREKLLTRGAKALSDAELLAIFLRTGIKGMNAVELATHLLAEFGSLRALFAADQTLFCLHKGLGPAKYAQLQAIIEMSQRHLEETLKEGDVLTSPQHTRHYLSQLLRDRQREVFYVLFLDNQHRVIAGEVLFEGTINSAAVYPREIVKRSLEFNAVALILAHNHPSGVAEPSQSDLRITRTISDALALVDIRVLDHFIVGDGEIVSFSEQGWL.

Residues 102-224 (VLTSPQHTRH…IVSFSEQGWL (123 aa)) enclose the MPN domain. Zn(2+) is bound by residues H173, H175, and D186. The JAMM motif motif lies at 173–186 (HNHPSGVAEPSQSD).

It belongs to the UPF0758 family.

This Photobacterium profundum (strain SS9) protein is UPF0758 protein PBPRA0202.